The primary structure comprises 213 residues: Golgi to ER traffic protein 1 (213 aa).

Topologically, residues 1-4 (MESW) are lumenal. The helical transmembrane segment at 5–25 (LLVILAFLVLERLWPLIDSLI) threads the bilayer. The Cytoplasmic segment spans residues 26–98 (QRFAQANSTK…RTKASLKKVK (73 aa)). The stretch at 55–99 (AQDQYVKWTKNNRTLEKINKQIEEEKKQLLSQVDRTKASLKKVKL) forms a coiled coil. Residues 99 to 119 (LVLITVPFTILKFYKGKMPIY) form a helical membrane-spanning segment. The Lumenal segment spans residues 120–158 (DLPKGLFPNYLQGLFQHGWVYLALGPLNIKKVGDGTHVT). A helical transmembrane segment spans residues 159-175 (VSLAIWLFALLKVVSTL). The Cytoplasmic portion of the chain corresponds to 176-213 (GNIWESLTAPAIPAPTITTDPIDQTNESEKPPVDQPVD). Residues 193–213 (TTDPIDQTNESEKPPVDQPVD) form a disordered region.

The protein belongs to the WRB/GET1 family. As to quaternary structure, component of the Golgi to ER traffic (GET) complex, which is composed of GET1, GET2 and GET3. Within the complex, GET1 and GET2 form a heterotetramer which is stabilized by phosphatidylinositol binding and which binds to the GET3 homodimer.

It localises to the endoplasmic reticulum membrane. Its subcellular location is the golgi apparatus membrane. In terms of biological role, required for the post-translational delivery of tail-anchored (TA) proteins to the endoplasmic reticulum. Together with GET2, acts as a membrane receptor for soluble GET3, which recognizes and selectively binds the transmembrane domain of TA proteins in the cytosol. The GET complex cooperates with the HDEL receptor ERD2 to mediate the ATP-dependent retrieval of resident ER proteins that contain a C-terminal H-D-E-L retention signal from the Golgi to the ER. This Kluyveromyces lactis (strain ATCC 8585 / CBS 2359 / DSM 70799 / NBRC 1267 / NRRL Y-1140 / WM37) (Yeast) protein is Golgi to ER traffic protein 1.